We begin with the raw amino-acid sequence, 150 residues long: Transthyretin (150 aa).

A signal peptide spans 1–20 (MASYRLLLLCLAGLVFVSEA). Residue Cys-30 is modified to Sulfocysteine. Lys-35 serves as a coordination point for L-thyroxine. Glu-62 is modified (4-carboxyglutamate). Glu-74 lines the L-thyroxine pocket. The N-linked (GlcNAc...) asparagine glycan is linked to Asn-118. L-thyroxine is bound at residue Ser-137.

The protein belongs to the transthyretin family. Homotetramer. Dimer of dimers. In the homotetramer, subunits assemble around a central channel that can accommodate two ligand molecules. Interacts with RBP4. Sulfonation of the reactive cysteine Cys-30 enhances the stability of the native conformation of TTR, avoiding misassembly of the protein leading to amyloid formation. As to expression, detected in plasma and cerebrospinal fluid (at protein level). Highly expressed in the choroid plexus. Detected in liver.

It is found in the secreted. Functionally, thyroid hormone-binding protein. Probably transports thyroxine from the bloodstream to the brain. The chain is Transthyretin (TTR) from Sus scrofa (Pig).